The primary structure comprises 100 residues: Large ribosomal subunit protein uL23 (100 aa).

The protein belongs to the universal ribosomal protein uL23 family. Part of the 50S ribosomal subunit. Contacts protein L29, and trigger factor when it is bound to the ribosome.

One of the early assembly proteins it binds 23S rRNA. One of the proteins that surrounds the polypeptide exit tunnel on the outside of the ribosome. Forms the main docking site for trigger factor binding to the ribosome. The polypeptide is Large ribosomal subunit protein uL23 (Salmonella paratyphi A (strain ATCC 9150 / SARB42)).